The primary structure comprises 754 residues: Circadian input-output histidine kinase CikA (754 aa).

An N-terminal domain, not required to complement the deletion strain region spans residues 1–183 (MLAPSSNCSL…QVSAQIRLSL (183 aa)). The tract at residues 184 to 338 (DLSEILTTTI…RDILQHLAEH (155 aa)) is GAF domain, required to complement the deletion strain. A Histidine kinase domain is found at 390–611 (TMSHELRTPL…TFTVWIPEQT (222 aa)). H393 is subject to Phosphohistidine; by autocatalysis. Residues 606-754 (WIPEQTLIEP…NLSEGDRPSS (149 aa)) form a psR domain, required to complement the deletion strain and for cell pole localization, attenuates autophosphorylation activity. Binds KaiB(fs) region. The 114-residue stretch at 629–742 (HILLLEEEDE…LLLTTLQGLC (114 aa)) folds into the Response regulatory domain.

In the N-terminal section; belongs to the phytochrome family. In terms of assembly, homodimer. Part of the circadian clock (KaiA, KaiB, KaiC, CikA, RpaA, SasA), the composition of which varies during the circadian cycle. Interacts with LdpA. KaiA and CikA compete for binding to KaiB(fs).

It localises to the cytoplasm. The protein resides in the membrane. It catalyses the reaction ATP + protein L-histidine = ADP + protein N-phospho-L-histidine.. Its function is as follows. Functions in an input pathway to the Kai circadian clock. Senses oxidized quinones via its C-terminal pseudo-receiver domain, providing a link between cell metabolism and the clock. Affects the ratio of phosphorylated to unphosphorylated KaiC, binds quinones via its pseudo-receptor domain. Quinone-binding destabilizes the protein rapidly. Autophosphorylates, does not transfer the phosphate to its pseudo-receiver (PsR) domain. May play a role in cell division, as suggested by its polar location and increased cell length in a deletion strain. Functionally, member of the two-component regulatory system CikA/RpaA output pathway from the circadian clock, negatively regulating kaiBC expression independently of labA and of sasA. One of three clock output pathways. Dephosphorylates phospho-RpaA, enhanced by KaiB and KaiC, has only modest kinase activity on RpaA. A very robust clock is reconstituted with KaiA, KaiB, KaiC, SasA, CikA and RpaA; output is measured by transcription from an appropriate reporter. This is Circadian input-output histidine kinase CikA from Synechococcus elongatus (strain ATCC 33912 / PCC 7942 / FACHB-805) (Anacystis nidulans R2).